Here is a 375-residue protein sequence, read N- to C-terminus: Histidine biosynthesis bifunctional protein HisB (375 aa).

Residues 1–168 (MTPIVFIDRD…GIAHTLADAP (168 aa)) form a histidinol-phosphatase region. The active-site Nucleophile is aspartate 8. Mg(2+) contacts are provided by aspartate 8, aspartate 10, and aspartate 128. Aspartate 10 serves as the catalytic Proton donor. The segment at 169–375 (RRAVVQRHTK…HVLPSTKGAL (207 aa)) is imidazoleglycerol-phosphate dehydratase.

It in the N-terminal section; belongs to the histidinol-phosphatase family. This sequence in the C-terminal section; belongs to the imidazoleglycerol-phosphate dehydratase family. It depends on Mg(2+) as a cofactor.

The protein resides in the cytoplasm. The enzyme catalyses D-erythro-1-(imidazol-4-yl)glycerol 3-phosphate = 3-(imidazol-4-yl)-2-oxopropyl phosphate + H2O. The catalysed reaction is L-histidinol phosphate + H2O = L-histidinol + phosphate. The protein operates within amino-acid biosynthesis; L-histidine biosynthesis; L-histidine from 5-phospho-alpha-D-ribose 1-diphosphate: step 6/9. Its pathway is amino-acid biosynthesis; L-histidine biosynthesis; L-histidine from 5-phospho-alpha-D-ribose 1-diphosphate: step 8/9. The polypeptide is Histidine biosynthesis bifunctional protein HisB (Xylella fastidiosa (strain 9a5c)).